The chain runs to 473 residues: Probable ribonuclease FAU-1 (473 aa).

It belongs to the FAU-1 family.

Its function is as follows. Probable RNase involved in rRNA stability through maturation and/or degradation of precursor rRNAs. Binds to RNA in loop regions with AU-rich sequences. The protein is Probable ribonuclease FAU-1 of Hyperthermus butylicus (strain DSM 5456 / JCM 9403 / PLM1-5).